The chain runs to 211 residues: uncharacterized protein (211 aa).

It belongs to the A.longa ORF167/ORF288 family.

It localises to the plastid. This is an uncharacterized protein from Euglena longa (Euglenophycean alga).